The primary structure comprises 210 residues: T-cell surface glycoprotein CD8 beta chain (210 aa).

A signal peptide spans 1–21 (MQPGLWLLLATQLAALRGSSV). The 111-residue stretch at 22-132 (LQQAPGSVMV…ELTFGKGTRL (111 aa)) folds into the Ig-like V-type domain. The Extracellular portion of the chain corresponds to 22 to 170 (LQQAPGSVMV…VTQKGPSCGL (149 aa)). Cysteine 41 and cysteine 116 are oxidised to a cystine. Asparagine 102 is a glycosylation site (N-linked (GlcNAc...) asparagine). The interval 139–161 (PTNSQPTKKPTPRKKMCRPPSPV) is disordered. A helical membrane pass occupies residues 171–191 (LTLGLLVAGVLVLLVSLGVAI). The Cytoplasmic segment spans residues 192–210 (HLYRLKRRARLRLLKQFYK).

In terms of assembly, forms disulfide-linked heterodimers with CD8A at the cell surface. Interacts with CD3D; this interaction couples TCR-CD3 with CD8. Interacts with LCK. Post-translationally, phosphorylated as a consequence of T-cell activation. In terms of processing, palmitoylated at the cytoplasmic tail and thereby targets the heterodimer CD8A/CD8B to lipid rafts unlike CD8A homodimers.

It localises to the cell membrane. Functionally, integral membrane glycoprotein that plays an essential role in the immune response and serves multiple functions in responses against both external and internal offenses. In T-cells, functions primarily as a coreceptor for MHC class I molecule:peptide complex. The antigens presented by class I peptides are derived from cytosolic proteins while class II derived from extracellular proteins. Interacts simultaneously with the T-cell receptor (TCR) and the MHC class I proteins presented by antigen presenting cells (APCs). In turn, recruits the Src kinase LCK to the vicinity of the TCR-CD3 complex. A palmitoylation site in the cytoplasmic tail of CD8B chain contributes to partitioning of CD8 into the plasma membrane lipid rafts where signaling proteins are enriched. Once LCK recruited, it initiates different intracellular signaling pathways by phosphorylating various substrates ultimately leading to lymphokine production, motility, adhesion and activation of cytotoxic T-lymphocytes (CTLs). Additionally, plays a critical role in thymic selection of CD8+ T-cells. In Felis catus (Cat), this protein is T-cell surface glycoprotein CD8 beta chain (CD8B).